Consider the following 366-residue polypeptide: Aminomethyltransferase (366 aa).

It belongs to the GcvT family. As to quaternary structure, the glycine cleavage system is composed of four proteins: P, T, L and H.

It catalyses the reaction N(6)-[(R)-S(8)-aminomethyldihydrolipoyl]-L-lysyl-[protein] + (6S)-5,6,7,8-tetrahydrofolate = N(6)-[(R)-dihydrolipoyl]-L-lysyl-[protein] + (6R)-5,10-methylene-5,6,7,8-tetrahydrofolate + NH4(+). Functionally, the glycine cleavage system catalyzes the degradation of glycine. The polypeptide is Aminomethyltransferase (Bordetella avium (strain 197N)).